We begin with the raw amino-acid sequence, 131 residues long: Profilin-4 (131 aa).

Residues cysteine 13 and cysteine 115 are joined by a disulfide bond. Positions alanine 81 to threonine 97 match the Involved in PIP2 interaction motif. Threonine 111 is modified (phosphothreonine).

Belongs to the profilin family. In terms of assembly, occurs in many kinds of cells as a complex with monomeric actin in a 1:1 ratio. Phosphorylated by MAP kinases.

It is found in the cytoplasm. The protein localises to the cytoskeleton. Binds to actin and affects the structure of the cytoskeleton. At high concentrations, profilin prevents the polymerization of actin, whereas it enhances it at low concentrations. The protein is Profilin-4 of Phleum pratense (Common timothy).